We begin with the raw amino-acid sequence, 120 residues long: A-type ATP synthase subunit F (120 aa).

It belongs to the V-ATPase F subunit family. Has multiple subunits with at least A(3), B(3), C, D, E, F, H, I and proteolipid K(x).

It localises to the cell membrane. In terms of biological role, component of the A-type ATP synthase that produces ATP from ADP in the presence of a proton gradient across the membrane. In Halobacterium salinarum (strain ATCC 29341 / DSM 671 / R1), this protein is A-type ATP synthase subunit F.